An 83-amino-acid polypeptide reads, in one-letter code: uncharacterized protein (83 aa).

The helical transmembrane segment at 55-75 (FGIGAAGVLGSFVTGLLIGWV) threads the bilayer.

It localises to the host membrane. Its function is as follows. May play a role in phage assembly. This is an uncharacterized protein from Pseudomonas phage Pf1 (Bacteriophage Pf1).